The sequence spans 404 residues: Cysteine desulfurase IscS (404 aa).

Pyridoxal 5'-phosphate-binding positions include 75-76, Asn155, Gln183, and 203-205; these read AT and SGH. The residue at position 206 (Lys206) is an N6-(pyridoxal phosphate)lysine. Thr243 serves as a coordination point for pyridoxal 5'-phosphate. The active-site Cysteine persulfide intermediate is Cys328. Position 328 (Cys328) interacts with [2Fe-2S] cluster.

This sequence belongs to the class-V pyridoxal-phosphate-dependent aminotransferase family. NifS/IscS subfamily. In terms of assembly, homodimer. Forms a heterotetramer with IscU, interacts with other sulfur acceptors. Pyridoxal 5'-phosphate serves as cofactor.

The protein resides in the cytoplasm. The enzyme catalyses (sulfur carrier)-H + L-cysteine = (sulfur carrier)-SH + L-alanine. Its pathway is cofactor biosynthesis; iron-sulfur cluster biosynthesis. Master enzyme that delivers sulfur to a number of partners involved in Fe-S cluster assembly, tRNA modification or cofactor biosynthesis. Catalyzes the removal of elemental sulfur and selenium atoms from cysteine and selenocysteine to produce alanine. Functions as a sulfur delivery protein for Fe-S cluster synthesis onto IscU, an Fe-S scaffold assembly protein, as well as other S acceptor proteins. Also functions as a selenium delivery protein in the pathway for the biosynthesis of selenophosphate. The polypeptide is Cysteine desulfurase IscS (Salmonella paratyphi C (strain RKS4594)).